Consider the following 790-residue polypeptide: Probable phosphoketolase (790 aa).

This sequence belongs to the XFP family. It depends on thiamine diphosphate as a cofactor.

This is Probable phosphoketolase from Nitrosomonas europaea (strain ATCC 19718 / CIP 103999 / KCTC 2705 / NBRC 14298).